The following is a 455-amino-acid chain: Gamma-glutamyl phosphate reductase (455 aa).

This sequence belongs to the gamma-glutamyl phosphate reductase family.

The protein localises to the cytoplasm. It carries out the reaction L-glutamate 5-semialdehyde + phosphate + NADP(+) = L-glutamyl 5-phosphate + NADPH + H(+). Its pathway is amino-acid biosynthesis; L-proline biosynthesis; L-glutamate 5-semialdehyde from L-glutamate: step 2/2. Functionally, catalyzes the NADPH-dependent reduction of L-glutamate 5-phosphate into L-glutamate 5-semialdehyde and phosphate. The product spontaneously undergoes cyclization to form 1-pyrroline-5-carboxylate. This is Gamma-glutamyl phosphate reductase from Synechococcus sp. (strain JA-3-3Ab) (Cyanobacteria bacterium Yellowstone A-Prime).